Consider the following 149-residue polypeptide: Large ribosomal subunit protein bL9 (149 aa).

This sequence belongs to the bacterial ribosomal protein bL9 family.

Its function is as follows. Binds to the 23S rRNA. This chain is Large ribosomal subunit protein bL9, found in Thermotoga petrophila (strain ATCC BAA-488 / DSM 13995 / JCM 10881 / RKU-1).